Reading from the N-terminus, the 356-residue chain is Heat-inducible transcription repressor HrcA (356 aa).

Belongs to the HrcA family.

Negative regulator of class I heat shock genes (grpE-dnaK-dnaJ and groELS operons). Prevents heat-shock induction of these operons. The protein is Heat-inducible transcription repressor HrcA of Chlorobaculum parvum (strain DSM 263 / NCIMB 8327) (Chlorobium vibrioforme subsp. thiosulfatophilum).